The following is a 34-amino-acid chain: Delta-conotoxin AtVIA (34 aa).

The propeptide occupies 1–4 (LSKK). A Pyrrolidone carboxylic acid modification is found at Q5. Disulfide bonds link C6–C23, C13–C27, and C22–C31.

In terms of tissue distribution, expressed by the venom duct.

It is found in the secreted. Functionally, probable toxin from a worm-hunter cone snail. Shows an excitatory activity on a majority of mouse lumbar dorsal root ganglion (DRG) neurons. Very probably inhibits the inactivation of voltage-gated sodium channels (Nav). This chain is Delta-conotoxin AtVIA, found in Conus ateralbus (Cone snail).